Consider the following 431-residue polypeptide: MSLMTKLGFRALVASCLIAAGSAANAQVNVLITGVGSTQFPIATANFANEAGLPQQVTSIVRADLARSGKFTNIDAGSTPVPETASVDLGAWKAKGANAFVAGSVNHEGNGQYKINFILYDTVKQQSLGGLSLSANDTTLRTAGHKIADYIYQKLLGVRGVFATRLSYVIKTGNRYQLQISDSDGQNARIALSSTEPIISPAWSPSGTKVAYVSFERKKPIVYIHDLPTGRRYMVSDQKGNNSAPAWSPDGNTLAVALSLTGNTQIYSVNSNGGGLRRLTQSSSIDTEPFYSPDGRWIYFTSDRGGAPQIYRMPAQGESAGAAQRVTFTGSYNTSPRVSPDGKLLAYISRTGGGFKLYVQDLQTGAANAITNTNRDESPSFAANGQYILYATQSGGRNVLAAVPSDGSAPPQILSVQGGSVREPSWGPFMQ.

An N-terminal signal peptide occupies residues 1–26; that stretch reads MSLMTKLGFRALVASCLIAAGSAANA. Residues 411–431 form a disordered region; it reads PQILSVQGGSVREPSWGPFMQ.

Belongs to the TolB family. As to quaternary structure, the Tol-Pal system is composed of five core proteins: the inner membrane proteins TolA, TolQ and TolR, the periplasmic protein TolB and the outer membrane protein Pal. They form a network linking the inner and outer membranes and the peptidoglycan layer.

Its subcellular location is the periplasm. In terms of biological role, part of the Tol-Pal system, which plays a role in outer membrane invagination during cell division and is important for maintaining outer membrane integrity. This Burkholderia multivorans (strain ATCC 17616 / 249) protein is Tol-Pal system protein TolB.